A 452-amino-acid chain; its full sequence is MESPDRKRQKVLKAKKTMPTSYQKQLEILNKSTNVEAPKTTVGTNIPNGHNQKMFSKNKENVKVMKVSEQINENACGALERHTALLEQVKHWIRQEICMINCNLFDKKLNELNERIGKTQCKSRHEAIAGELFVKIRRLQKRIKTVLSSQRNCLEPNTLPSNTVCKVTDSEAMNLNVTQKSVKSRSKRISSVNHTPLNSSEKAGRKTNLPSTCVEFASESNTDDVMLISVKNSNLTTSITSEQTEIRKNTSRNLSNSPNSMIKVGPVEKKFDFVIDLTREGPSNYSIESPSFTLKSTSKAVLRSKEIIPVAENGNEGFGSFEHLPPLPEPPAPLPEMADKIKDTLPPQKPELKVKWVLRPTSIALTWNIPKVNPNCAPVESYHLFLYYENSDHLTWKKIAEIKALPLPMACTLSQNLASTKYYFAVQSKDIFGRYGPFCNIKSIPRFSENLT.

Residue S184 is modified to Phosphoserine. The disordered stretch occupies residues 185–206 (RSKRISSVNHTPLNSSEKAGRK). Position 257 is a phosphoserine (S257). A Fibronectin type-III domain is found at 346-450 (PPQKPELKVK…IKSIPRFSEN (105 aa)).

The protein belongs to the MCAF family. Interacts with MBD1, SETDB1 and SP1. Probably forms a complex with SETDB1 and MBD1. Expressed in testis.

It is found in the nucleus. Its function is as follows. Recruiter that couples transcriptional factors to general transcription apparatus and thereby modulates transcription regulation and chromatin formation. Can both act as an activator or a repressor depending on the context. Mediates MBD1-dependent transcriptional repression, probably by recruiting complexes containing SETDB1. The complex formed with MBD1 and SETDB1 represses transcription and probably couples DNA methylation and histone H3 'Lys-9' trimethylation (H3K9me3) activity. In Mus musculus (Mouse), this protein is Activating transcription factor 7-interacting protein 2 (Atf7ip2).